The sequence spans 87 residues: Small ribosomal subunit protein uS17 (87 aa).

The protein belongs to the universal ribosomal protein uS17 family. As to quaternary structure, part of the 30S ribosomal subunit.

One of the primary rRNA binding proteins, it binds specifically to the 5'-end of 16S ribosomal RNA. This chain is Small ribosomal subunit protein uS17, found in Cytophaga hutchinsonii (strain ATCC 33406 / DSM 1761 / CIP 103989 / NBRC 15051 / NCIMB 9469 / D465).